The primary structure comprises 222 residues: PKHD-type hydroxylase PCC8801_2196 (222 aa).

A Fe2OG dioxygenase domain is found at 78 to 175 (RIHSLLFSRY…RLVVVGWIES (98 aa)). Fe cation is bound by residues H96, D98, and H156. R166 serves as a coordination point for 2-oxoglutarate.

It depends on Fe(2+) as a cofactor. L-ascorbate serves as cofactor.

The polypeptide is PKHD-type hydroxylase PCC8801_2196 (Rippkaea orientalis (strain PCC 8801 / RF-1) (Cyanothece sp. (strain PCC 8801))).